The following is a 445-amino-acid chain: SVP1-like protein 2 (445 aa).

2 WD repeats span residues 218–258 and 263–302; these read AHKA…LLKE and LDRAEIYDMCFSPLGTRLAVVSDKQTLHVFQIAPMAEGTL. The disordered stretch occupies residues 301–321; sequence TLNPANPEDHQSSGSNGHIKA. Residues 312 to 321 show a composition bias toward polar residues; that stretch reads SSGSNGHIKA.

This sequence belongs to the WD repeat PROPPIN family.

Its subcellular location is the vacuole membrane. It is found in the cytoplasmic vesicle membrane. Its function is as follows. Involved in mitochondrial or peroxisomal functions and amino acid signaling pathways. The protein is SVP1-like protein 2 (HSV2) of Candida glabrata (strain ATCC 2001 / BCRC 20586 / JCM 3761 / NBRC 0622 / NRRL Y-65 / CBS 138) (Yeast).